A 253-amino-acid chain; its full sequence is Small ribosomal subunit protein uS2 (253 aa).

It belongs to the universal ribosomal protein uS2 family.

The polypeptide is Small ribosomal subunit protein uS2 (Chlorobium luteolum (strain DSM 273 / BCRC 81028 / 2530) (Pelodictyon luteolum)).